Consider the following 300-residue polypeptide: UDP-N-acetylenolpyruvoylglucosamine reductase (300 aa).

An FAD-binding PCMH-type domain is found at T29–G193. Residue R172 is part of the active site. Residue S222 is the Proton donor of the active site. E292 is a catalytic residue.

The protein belongs to the MurB family. FAD serves as cofactor.

Its subcellular location is the cytoplasm. The enzyme catalyses UDP-N-acetyl-alpha-D-muramate + NADP(+) = UDP-N-acetyl-3-O-(1-carboxyvinyl)-alpha-D-glucosamine + NADPH + H(+). Its pathway is cell wall biogenesis; peptidoglycan biosynthesis. Cell wall formation. In Pediococcus pentosaceus (strain ATCC 25745 / CCUG 21536 / LMG 10740 / 183-1w), this protein is UDP-N-acetylenolpyruvoylglucosamine reductase.